Consider the following 232-residue polypeptide: Single-stranded DNA-binding protein (232 aa).

Residues 189–232 (DWADEVEENGYVASGSAKASKPRDEESWDEDDEESEEADEDGDF) are disordered. The segment at 212–232 (DEESWDEDDEESEEADEDGDF) is dimerization and interaction with the viral DNA polymerase and helicase. Residues 214-232 (ESWDEDDEESEEADEDGDF) are compositionally biased toward acidic residues.

This sequence belongs to the Teseptimavirus single-stranded DNA-binding protein family. As to quaternary structure, homodimer. Interacts (via C-terminus) with the viral DNA polymerase. Interacts with the viral helicase/primase. Part of the replicase complex that includes the DNA polymerase, host thioredoxin, the primase/helicase and the single-stranded DNA binding protein.

Functionally, single-stranded DNA-binding protein that participates in viral DNA replication, formation of concatemers, recombination and repair of double-stranded breaks. Coats the lagging-strand ssDNA as the replication fork advances and stimulates the activities of viral DNA polymerase and primase/helicase. Coordinates simultaneous synthesis of leading- and lagging-strands. Together with DNA primase/helicase, promotes pairing of two homologous DNA molecules containing complementary single-stranded regions and mediates homologous DNA strand exchange. Also promotes the formation of joint molecules. Disrupts loops, hairpins and other secondary structures present on ssDNA to reduce and eliminate pausing of viral DNA polymerase at specific sites during elongation. The protein is Single-stranded DNA-binding protein of Escherichia phage T7 (Bacteriophage T7).